The primary structure comprises 176 residues: Large ribosomal subunit protein uL6 (176 aa).

This sequence belongs to the universal ribosomal protein uL6 family. As to quaternary structure, part of the 50S ribosomal subunit.

In terms of biological role, this protein binds to the 23S rRNA, and is important in its secondary structure. It is located near the subunit interface in the base of the L7/L12 stalk, and near the tRNA binding site of the peptidyltransferase center. The polypeptide is Large ribosomal subunit protein uL6 (Lactobacillus helveticus (strain DPC 4571)).